We begin with the raw amino-acid sequence, 149 residues long: Ribosome maturation factor RimP (149 aa).

It belongs to the RimP family.

It localises to the cytoplasm. Its function is as follows. Required for maturation of 30S ribosomal subunits. The protein is Ribosome maturation factor RimP of Neisseria meningitidis serogroup A / serotype 4A (strain DSM 15465 / Z2491).